We begin with the raw amino-acid sequence, 247 residues long: Ribonuclease PH (247 aa).

Phosphate is bound by residues R96 and 134–136; that span reads GTR.

It belongs to the RNase PH family. In terms of assembly, homohexameric ring arranged as a trimer of dimers.

It carries out the reaction tRNA(n+1) + phosphate = tRNA(n) + a ribonucleoside 5'-diphosphate. Phosphorolytic 3'-5' exoribonuclease that plays an important role in tRNA 3'-end maturation. Removes nucleotide residues following the 3'-CCA terminus of tRNAs; can also add nucleotides to the ends of RNA molecules by using nucleoside diphosphates as substrates, but this may not be physiologically important. Probably plays a role in initiation of 16S rRNA degradation (leading to ribosome degradation) during starvation. In Tropheryma whipplei (strain TW08/27) (Whipple's bacillus), this protein is Ribonuclease PH.